A 278-amino-acid chain; its full sequence is Release factor glutamine methyltransferase (278 aa).

S-adenosyl-L-methionine is bound by residues 117 to 121 (GTGSG), Asp-140, and Asn-184. 184–187 (NPPY) lines the substrate pocket.

The protein belongs to the protein N5-glutamine methyltransferase family. PrmC subfamily.

The catalysed reaction is L-glutaminyl-[peptide chain release factor] + S-adenosyl-L-methionine = N(5)-methyl-L-glutaminyl-[peptide chain release factor] + S-adenosyl-L-homocysteine + H(+). In terms of biological role, methylates the class 1 translation termination release factors RF1/PrfA and RF2/PrfB on the glutamine residue of the universally conserved GGQ motif. The chain is Release factor glutamine methyltransferase from Bacteroides thetaiotaomicron (strain ATCC 29148 / DSM 2079 / JCM 5827 / CCUG 10774 / NCTC 10582 / VPI-5482 / E50).